The chain runs to 620 residues: MDSHTLIQALIYLGSAALIVPIAVRLGLGSVLGYLIAGCIIGPWGLRLVTDAESILHFAEIGVVLMLFIIGLELDPQRLWKLRAAVFGGGALQMVICGGLLGLFCMLLGLRWQVAELIGMTLALSSTAIAMQAMNERNLMVTQMGRSAFAVLLFQDIAAIPLVAMIPLLAASNASTTMGAFALSALKVAGALVLVVLLGRYVTRPALRFVARSGLREVFSAVALFLVFGFGLLLEEVGLSMAMGAFLAGVLLASSEYRHALESDIEPFKGLLLGLFFIGVGMSIDFGTLLENPLRIVILLLGFLIIKIAMLWLIARPLQVPNKQRRWFAVLLGQGSEFAFVVFGAAQMANVLEPEWAKSLTLAVALSMAATPILLVILNRLEQSSTEEAREADEIDEEQPRVIIAGFGRFGQITGRLLLSSGVKMVVLDHDPDHIETLRKFGMKVFYGDATRMDLLESAGAAKAEVLINAIDDPQTNLQLTEMVKEHFPHLQIIARARDVDHYIRLRQAGVEKPERETFEGALKTGRLALESLGLGPYEARERADVFRRFNIQMVEEMAMVENDTKARAAVYKRTSAMLSEIITEDREHLSLIQRHGWQGTEEGKHTGNMADEPETKPSS.

12 helical membrane-spanning segments follow: residues 4–24 (HTLI…PIAV), 26–46 (LGLG…PWGL), 54–74 (SILH…GLEL), 90–110 (GALQ…LLGL), 114–134 (VAEL…MQAM), 149–169 (FAVL…IPLL), 178–198 (MGAF…VVLL), 218–238 (VFSA…EEVG), 270–290 (GLLL…GTLL), 294–314 (LRIV…LWLI), 327–347 (WFAV…GAAQ), and 359–379 (SLTL…VILN). Positions 399-518 (QPRVIIAGFG…AGVEKPERET (120 aa)) constitute an RCK N-terminal domain. The segment at 597 to 620 (GWQGTEEGKHTGNMADEPETKPSS) is disordered.

The protein belongs to the monovalent cation:proton antiporter 2 (CPA2) transporter (TC 2.A.37) family. KefC subfamily. In terms of assembly, homodimer. Interacts with the regulatory subunit KefF.

Its subcellular location is the cell inner membrane. In terms of biological role, pore-forming subunit of a potassium efflux system that confers protection against electrophiles. Catalyzes K(+)/H(+) antiport. This is Glutathione-regulated potassium-efflux system protein KefC from Escherichia coli O6:K15:H31 (strain 536 / UPEC).